Reading from the N-terminus, the 89-residue chain is DNA-binding protein HU (89 aa).

It belongs to the bacterial histone-like protein family. In terms of assembly, homodimer. The dimer interacts with the DNA mimic protein DMP12. It also interacts with the monomeric form of the DNA mimic protein DMP19 with 1:1 stoichiometry.

Activity is regulated by the DNA mimic protein DMP12. Activity is inhibited in the presence of the DNA mimic protein DMP19, which interacts with HU and prevents the binding of HU to DNA. Its function is as follows. Histone-like DNA-binding protein which is capable of wrapping DNA to stabilize it, and thus to prevent its denaturation under extreme environmental conditions. This chain is DNA-binding protein HU, found in Neisseria meningitidis serogroup B (strain ATCC BAA-335 / MC58).